The sequence spans 187 residues: UPF0301 protein Sbal195_3177 (187 aa).

Belongs to the UPF0301 (AlgH) family.

This is UPF0301 protein Sbal195_3177 from Shewanella baltica (strain OS195).